Consider the following 719-residue polypeptide: MPAKRSRTFRQSGSALLALLAIILLMNISCTSAARDHRRQTNLEAKVGSHVVFNCYIDFPFDAPIPYLVHWTKDNKKIFTWYEQETSTSELFNGRLHLVENHPEFGRASVNLTAIRESDQGWYHCQVSFPNRSPSVRNNGTAYHLAVQGGSLIRIPPVNQTIREGQTAFFHCVMKHPENSQASWYKDGVLLQEVQDLVRRFYMGPDGSLSIDPTMMSDLGEYECKVRNSDGELQTAKAFLNIQYKAKVIYAPPEVFLPYGQPAVLDCHFRANPPLKNLRWEKDGLLFDSYNVPGVFYKMNGSLFFAKVDENHAGSYTCTPYNDLGTDGPSPVISVIVLRPPIFSVTPKAIYIQKLGEAAELPCEAIDRDGNNRPSIIWGRKDGQPLPADRFSLSGGNLTITGLVEGDRGIYECSATNEAATITAEAELMIENIAPRAPYNLTANSTETCITIRWQPGYLRPNLEYTVWYRLMEAPEWRTLRVLDKKVMEATVQHLQPGKEYEFMVLSQDKYGDGMFSKQFRFQTLPSPIRADDFDAQQLQHDLGQVTAPAGGLGAPWNLTAISNQQGWLLHWEHPVQGLEGLRLYAVRWWKEPEHFLIGHAETFDNYYQLRHLKEDTLFKVQVLAVGTETQQSVPSHELLIDVPSQRKVRALIIGSSVGVIFLLCALCAFLYVKRSCLRHLFAKDSSASEDEDTAESGDCDSDEQDQRDRDSIKIRQST.

Positions 1–33 are cleaved as a signal peptide; it reads MPAKRSRTFRQSGSALLALLAIILLMNISCTSA. The Extracellular portion of the chain corresponds to 34 to 650; sequence ARDHRRQTNL…IDVPSQRKVR (617 aa). 4 Ig-like domains span residues 40 to 128, 134 to 241, 246 to 334, and 341 to 429; these read QTNL…CQVS, PSVR…AFLN, AKVI…PVIS, and PIFS…AELM. 4 disulfide bridges follow: cysteine 55/cysteine 125, cysteine 172/cysteine 224, cysteine 267/cysteine 318, and cysteine 363/cysteine 413. 2 Fibronectin type-III domains span residues 434-527 and 555-646; these read APRA…TLPS and APWN…VPSQ. Residues 651 to 671 form a helical membrane-spanning segment; sequence ALIIGSSVGVIFLLCALCAFL. Residues 672–719 lie on the Cytoplasmic side of the membrane; that stretch reads YVKRSCLRHLFAKDSSASEDEDTAESGDCDSDEQDQRDRDSIKIRQST. The disordered stretch occupies residues 685–719; it reads DSSASEDEDTAESGDCDSDEQDQRDRDSIKIRQST. The segment covering 688 to 704 has biased composition (acidic residues); the sequence is ASEDEDTAESGDCDSDE. The segment covering 705–719 has biased composition (basic and acidic residues); sequence QDQRDRDSIKIRQST.

The protein belongs to the immunoglobulin superfamily. As to quaternary structure, interacts with tutl. In terms of tissue distribution, in the visual system, expressed in lamina and medulla (at protein level).

It localises to the cell membrane. Its subcellular location is the cell projection. The protein resides in the axon. Functionally, in the developing eye, has a role in axonal targeting of the R7 photoreceptor where it functions together with tutl. Probably mediates homotypic cell adhesion; the effect is inhibited by Lar. The chain is Protein borderless from Drosophila melanogaster (Fruit fly).